The chain runs to 759 residues: Probable Na(+)/H(+) antiporter C3A11.09 (759 aa).

Transmembrane regions (helical) follow at residues His-12 to Ile-32, Leu-36 to Ala-56, Met-105 to Ile-125, Ser-133 to Gly-153, Glu-172 to Ile-192, Ile-206 to Ala-226, Phe-244 to Val-264, Val-295 to Pro-315, Met-319 to Ala-339, Ala-361 to Ala-381, and Val-415 to Met-435. Phosphothreonine is present on Thr-442. Phosphoserine is present on Ser-446. Residue Thr-448 is modified to Phosphothreonine. Composition is skewed to basic and acidic residues over residues Leu-514 to Ala-529, Tyr-537 to Glu-547, Ile-590 to Ala-601, Asn-622 to Arg-647, and Ser-655 to Gln-671. 3 disordered regions span residues Leu-514 to Asp-558, Ser-578 to Arg-606, and Asn-622 to Glu-759. Positions Asn-696–Asn-713 are enriched in polar residues. N-linked (GlcNAc...) asparagine glycans are attached at residues Asn-699 and Asn-713. A compositionally biased stretch (low complexity) spans Arg-724 to Glu-733. Residue Ser-735 is modified to Phosphoserine.

Belongs to the fungal Na(+)/H(+) exchanger family.

It is found in the membrane. Sodium export from cell, takes up external protons in exchange for internal sodium ions. This chain is Probable Na(+)/H(+) antiporter C3A11.09 (sod22), found in Schizosaccharomyces pombe (strain 972 / ATCC 24843) (Fission yeast).